The following is a 537-amino-acid chain: Exodeoxyribonuclease 7 large subunit (537 aa).

Positions 508–537 (GEGAPVEPPQAARPSKGARTKAAQPSLFDD) are disordered.

The protein belongs to the XseA family. Heterooligomer composed of large and small subunits.

It is found in the cytoplasm. The enzyme catalyses Exonucleolytic cleavage in either 5'- to 3'- or 3'- to 5'-direction to yield nucleoside 5'-phosphates.. Bidirectionally degrades single-stranded DNA into large acid-insoluble oligonucleotides, which are then degraded further into small acid-soluble oligonucleotides. The protein is Exodeoxyribonuclease 7 large subunit of Azorhizobium caulinodans (strain ATCC 43989 / DSM 5975 / JCM 20966 / LMG 6465 / NBRC 14845 / NCIMB 13405 / ORS 571).